A 347-amino-acid chain; its full sequence is D-alanine--D-alanine ligase (347 aa).

One can recognise an ATP-grasp domain in the interval 131 to 333 (KRVLESAGIA…YPELIERLVD (203 aa)). An ATP-binding site is contributed by 161–216 (EEKLAYPVFAKPSNMGSSVGISKSENQEELRQALKLAFRYDSRVLVEQGVNAREIE). Mg(2+) contacts are provided by aspartate 287, glutamate 300, and asparagine 302.

It belongs to the D-alanine--D-alanine ligase family. The cofactor is Mg(2+). Mn(2+) is required as a cofactor.

It localises to the cytoplasm. The catalysed reaction is 2 D-alanine + ATP = D-alanyl-D-alanine + ADP + phosphate + H(+). It functions in the pathway cell wall biogenesis; peptidoglycan biosynthesis. Its function is as follows. Cell wall formation. The protein is D-alanine--D-alanine ligase of Streptococcus pneumoniae (strain P1031).